The following is a 433-amino-acid chain: Protein disulfide-isomerase A6 homolog (433 aa).

An N-terminal signal peptide occupies residues 1–19; the sequence is MRQLASILLLAFVVGSVSA. Thioredoxin domains are found at residues 20 to 119 and 120 to 267; these read FYSP…GQRT and AKAI…KHVA. Active-site nucleophile residues include Cys-55, Cys-58, Cys-186, and Cys-189. Cystine bridges form between Cys-55-Cys-58 and Cys-186-Cys-189. Asn-279 carries an N-linked (GlcNAc...) asparagine glycan. Positions 405–433 are disordered; the sequence is VDPWDGKDGQLPTEEDIDLSDIDLDKDEL. Positions 417-433 are enriched in acidic residues; sequence TEEDIDLSDIDLDKDEL. Residues 430–433 carry the Prevents secretion from ER motif; the sequence is KDEL.

Belongs to the protein disulfide isomerase family. In terms of assembly, interacts with Drpr (via extracellular region). In terms of tissue distribution, in the blastoderm embryo, expression starts at the anterior and posterior poles and later appears as broad stripes. Following gastrulation, expressed in midline precursor cells and the posterior head with low levels present throughout the embryo. During germ band extension, weak dorsoventral stripes of expression are evident. Midline expression begins and is retained throughout embryogenesis in clusters of cells in each segment in the central nervous system. At least some of the midline expression occurs in VUM neurons.

Its subcellular location is the endoplasmic reticulum lumen. The protein resides in the cell surface. The enzyme catalyses Catalyzes the rearrangement of -S-S- bonds in proteins.. Binds to both apoptotic cells and phagocytes and promotes Drpr-dependent phagocytosis of apoptotic cells. This Drosophila melanogaster (Fruit fly) protein is Protein disulfide-isomerase A6 homolog.